Reading from the N-terminus, the 140-residue chain is Short-chain diamines transporter (140 aa).

Transmembrane regions (helical) follow at residues Ile-7–Leu-27, Leu-36–Leu-56, Val-79–Ile-99, and Leu-105–Leu-125.

This sequence belongs to the proteobacterial antimicrobial compound efflux (PACE) (TC 2.A.117) family.

The protein localises to the cell inner membrane. Its function is as follows. Mediates the efflux of short-chain diamines when energized by an electrochemical gradient. Confers resistance to chlorhexidine, benzalkonium, proflavine and acriflavine. Mediates efflux of both proflavine and acriflavine via an energy-dependent mechanism. This Vibrio parahaemolyticus serotype O3:K6 (strain RIMD 2210633) protein is Short-chain diamines transporter.